Reading from the N-terminus, the 712-residue chain is Dynamin-1-like protein drp-1 (712 aa).

Residues 24 to 304 enclose the Dynamin-type G domain; it reads QIQLPQIVVV…LMHHIRNCLP (281 aa). Residues 34–41 are G1 motif; sequence GSQSAGKS. Residues 60 to 62 form a G2 motif region; that stretch reads VTR. Positions 148 to 151 are G3 motif; sequence DLPG. Positions 217-220 are G4 motif; that stretch reads TKLD. The tract at residues 247-250 is G5 motif; sequence VNRS. The tract at residues 280 to 502 is interaction with caspase ced-9; the sequence is SRNGTPYLAK…LAYINTKHPE (223 aa). A disordered region spans residues 523-542; sequence GRSRNRHASTGERAVSAHGE. Residues 620 to 711 form the GED domain; that stretch reads VAIIERLIRN…IISEVRETQV (92 aa).

The protein belongs to the TRAFAC class dynamin-like GTPase superfamily. Dynamin/Fzo/YdjA family. As to quaternary structure, interacts (via residues 280-502) with caspase ced-9; the interaction is enhanced by GTP rather than GDP; the interaction is probably direct and may occur at the mitochondrion. Highly expressed in neurons, in intestinal cells and in the body wall, pharyngeal, and vulval muscles.

The protein localises to the mitochondrion. The protein resides in the mitochondrion outer membrane. It is found in the cytoplasm. It localises to the cytosol. The catalysed reaction is GTP + H2O = GDP + phosphate + H(+). With respect to regulation, GTPase activity is increased by binding to phospholipid membranes. Functionally, functions in mitochondrial division. Functions in peroxisomal division. Mediates membrane fission, perhaps mainly of the mitochondrial outer membrane. Mitochondrial fission may be promoted by recruitment to mitochondrial membranes via the egl-1/ced-9 complex. Involved in the coordination of mitochondrial division with autophagy in response to acute heat stress during larval development. Plays a role in apoptosis by promoting mitochondrial elimination and cell-death execution, acting downstream of caspase ced-3, and perhaps independently of FIS1-related protein fis-2, caspase ced-9 and apoptosis-inducing factor AIFM/wah-1. Role in promoting apoptosis dependent upon cleavage of drp-1 by ced-3. Involved in negatively modulating longevity in concert with the Insulin/IGF-1-like signaling (IIS) mediated pathway. In Caenorhabditis elegans, this protein is Dynamin-1-like protein drp-1.